An 880-amino-acid polypeptide reads, in one-letter code: Pyruvate, phosphate dikinase (880 aa).

Residues 1–348 (MNKLIYYFGN…LYILQTRTAK (348 aa)) form an N-terminal region. Arg97 contacts ATP. A linker 1 region spans residues 349–405 (RTAIAAINIAVQMVKEKLISKEQALMRIDPESLNQLLHTRIDYSKGLTSIAEGLPAS). The interval 406–503 (PGAATGIVVF…VIKQGDIITI (98 aa)) is central. Thr458 is subject to Phosphothreonine; by PDRP1. His460 (tele-phosphohistidine intermediate) is an active-site residue. The interval 504–538 (DGGSGKIFLGEMPLIQPTFSEESKLILDWADEISS) is linker 2. The segment at 539-880 (LKVRANAETV…AAQAKIKQGS (342 aa)) is C-terminal. Positions 566, 622, 750, 771, 772, 773, and 774 each coordinate substrate. Glu750 is a binding site for Mg(2+). Asp774 is a Mg(2+) binding site. The active-site Proton donor is Cys836.

The protein belongs to the PEP-utilizing enzyme family. In terms of assembly, homodimer. Requires Mg(2+) as cofactor. Phosphorylation of Thr-458 in the dark inactivates the enzyme. Dephosphorylation upon light stimulation reactivates the enzyme.

The catalysed reaction is pyruvate + phosphate + ATP = phosphoenolpyruvate + AMP + diphosphate + H(+). Its activity is regulated as follows. Activated by light-induced dephosphorylation. Inhibited by dark-induced phosphorylation. Both reactions are catalyzed by PDRP1. Functionally, catalyzes the reversible phosphorylation of pyruvate and phosphate. The protein is Pyruvate, phosphate dikinase (ppdK) of Rickettsia prowazekii (strain Madrid E).